Here is a 469-residue protein sequence, read N- to C-terminus: Ribulose bisphosphate carboxylase large chain (469 aa).

Substrate contacts are provided by Asn115 and Thr165. The active-site Proton acceptor is Lys167. Lys169 is a substrate binding site. 3 residues coordinate Mg(2+): Lys193, Asp195, and Glu196. Lys193 carries the post-translational modification N6-carboxylysine. Catalysis depends on His286, which acts as the Proton acceptor. Substrate is bound by residues Arg287, His319, and Ser371.

It belongs to the RuBisCO large chain family. Type I subfamily. In terms of assembly, heterohexadecamer of 8 large chains and 8 small chains. Mg(2+) is required as a cofactor.

Its subcellular location is the plastid. It is found in the organellar chromatophore. It carries out the reaction 2 (2R)-3-phosphoglycerate + 2 H(+) = D-ribulose 1,5-bisphosphate + CO2 + H2O. The catalysed reaction is D-ribulose 1,5-bisphosphate + O2 = 2-phosphoglycolate + (2R)-3-phosphoglycerate + 2 H(+). Functionally, ruBisCO catalyzes two reactions: the carboxylation of D-ribulose 1,5-bisphosphate, the primary event in carbon dioxide fixation, as well as the oxidative fragmentation of the pentose substrate. Both reactions occur simultaneously and in competition at the same active site. In Paulinella chromatophora, this protein is Ribulose bisphosphate carboxylase large chain.